Reading from the N-terminus, the 410-residue chain is Arginine deiminase (410 aa).

The Amidino-cysteine intermediate role is filled by Cys-399.

It belongs to the arginine deiminase family.

It localises to the cytoplasm. It carries out the reaction L-arginine + H2O = L-citrulline + NH4(+). Its pathway is amino-acid degradation; L-arginine degradation via ADI pathway; carbamoyl phosphate from L-arginine: step 1/2. This Listeria monocytogenes serovar 1/2a (strain ATCC BAA-679 / EGD-e) protein is Arginine deiminase.